Consider the following 321-residue polypeptide: Urease accessory protein UreD (321 aa).

The protein belongs to the UreD family. As to quaternary structure, ureD, UreF and UreG form a complex that acts as a GTP-hydrolysis-dependent molecular chaperone, activating the urease apoprotein by helping to assemble the nickel containing metallocenter of UreC. The UreE protein probably delivers the nickel.

The protein resides in the cytoplasm. Required for maturation of urease via the functional incorporation of the urease nickel metallocenter. This Photorhabdus laumondii subsp. laumondii (strain DSM 15139 / CIP 105565 / TT01) (Photorhabdus luminescens subsp. laumondii) protein is Urease accessory protein UreD.